A 345-amino-acid polypeptide reads, in one-letter code: Protein RecA (345 aa).

68–75 (GVESSGKT) is a binding site for ATP.

This sequence belongs to the RecA family.

It is found in the cytoplasm. Its function is as follows. Can catalyze the hydrolysis of ATP in the presence of single-stranded DNA, the ATP-dependent uptake of single-stranded DNA by duplex DNA, and the ATP-dependent hybridization of homologous single-stranded DNAs. It interacts with LexA causing its activation and leading to its autocatalytic cleavage. This Aquifex aeolicus (strain VF5) protein is Protein RecA.